Here is a 541-residue protein sequence, read N- to C-terminus: T-complex protein 1 subunit epsilon (541 aa).

The residue at position 2 (alanine 2) is an N-acetylalanine. Lysine 20 is covalently cross-linked (Glycyl lysine isopeptide (Lys-Gly) (interchain with G-Cter in SUMO2)). Residue serine 26 is modified to Phosphoserine. Glycine 53 provides a ligand contact to ADP. Glycine 53 contacts ATP. Aspartate 104 provides a ligand contact to Mg(2+). Glycine 105, threonine 106, threonine 107, and serine 175 together coordinate ADP. The ATP site is built by threonine 106 and threonine 107. Glycyl lysine isopeptide (Lys-Gly) (interchain with G-Cter in SUMO2) cross-links involve residues lysine 210, lysine 214, lysine 265, lysine 275, and lysine 279. A Phosphoserine modification is found at serine 346. Lysine 392 participates in a covalent cross-link: Glycyl lysine isopeptide (Lys-Gly) (interchain with G-Cter in SUMO2). Residues glycine 422, aspartate 492, glutamate 508, and lysine 513 each contribute to the ADP site. Position 422 (glycine 422) interacts with ATP. Serine 539 is modified (phosphoserine).

Belongs to the TCP-1 chaperonin family. In terms of assembly, component of the chaperonin-containing T-complex (TRiC), a hexadecamer composed of two identical back-to-back stacked rings enclosing a protein folding chamber. Each ring is made up of eight different subunits: TCP1/CCT1, CCT2, CCT3, CCT4, CCT5, CCT6A/CCT6, CCT7, CCT8. Interacts with PACRG. Interacts with DNAAF4. Interacts with DLEC1. Interacts with SPMAP2. In terms of processing, ubiquitinated by the DCX(DCAF12) complex specifically recognizes the diglutamate (Glu-Glu) at the C-terminus, leading to its degradation.

The protein localises to the cytoplasm. It is found in the cytoskeleton. Its subcellular location is the microtubule organizing center. The protein resides in the centrosome. It carries out the reaction ATP + H2O = ADP + phosphate + H(+). Its function is as follows. Component of the chaperonin-containing T-complex (TRiC), a molecular chaperone complex that assists the folding of actin, tubulin and other proteins upon ATP hydrolysis. The TRiC complex mediates the folding of WRAP53/TCAB1, thereby regulating telomere maintenance. As part of the TRiC complex may play a role in the assembly of BBSome, a complex involved in ciliogenesis regulating transports vesicles to the cilia. In Pongo abelii (Sumatran orangutan), this protein is T-complex protein 1 subunit epsilon (CCT5).